The following is a 480-amino-acid chain: Protein nucleotidyltransferase YdiU (480 aa).

The ATP site is built by Gly-86, Gly-88, Arg-89, Lys-109, Asp-121, Gly-122, Arg-172, and Arg-179. Asp-248 (proton acceptor) is an active-site residue. Asn-249 and Asp-258 together coordinate Mg(2+). ATP is bound at residue Asp-258.

This sequence belongs to the SELO family. It depends on Mg(2+) as a cofactor. The cofactor is Mn(2+).

The enzyme catalyses L-seryl-[protein] + ATP = 3-O-(5'-adenylyl)-L-seryl-[protein] + diphosphate. It catalyses the reaction L-threonyl-[protein] + ATP = 3-O-(5'-adenylyl)-L-threonyl-[protein] + diphosphate. It carries out the reaction L-tyrosyl-[protein] + ATP = O-(5'-adenylyl)-L-tyrosyl-[protein] + diphosphate. The catalysed reaction is L-histidyl-[protein] + UTP = N(tele)-(5'-uridylyl)-L-histidyl-[protein] + diphosphate. The enzyme catalyses L-seryl-[protein] + UTP = O-(5'-uridylyl)-L-seryl-[protein] + diphosphate. It catalyses the reaction L-tyrosyl-[protein] + UTP = O-(5'-uridylyl)-L-tyrosyl-[protein] + diphosphate. In terms of biological role, nucleotidyltransferase involved in the post-translational modification of proteins. It can catalyze the addition of adenosine monophosphate (AMP) or uridine monophosphate (UMP) to a protein, resulting in modifications known as AMPylation and UMPylation. The sequence is that of Protein nucleotidyltransferase YdiU from Salmonella newport (strain SL254).